The sequence spans 204 residues: Guanylate kinase (204 aa).

Residues 3–181 enclose the Guanylate kinase-like domain; that stretch reads GTLYIVSASS…AVSEMSAIFT (179 aa). 10–17 contacts ATP; that stretch reads ASSGTGKS.

Belongs to the guanylate kinase family.

The protein localises to the cytoplasm. It catalyses the reaction GMP + ATP = GDP + ADP. Functionally, essential for recycling GMP and indirectly, cGMP. The chain is Guanylate kinase from Xylella fastidiosa (strain Temecula1 / ATCC 700964).